The chain runs to 262 residues: Probable cutinase 1 (262 aa).

The first 19 residues, 1–19 (MAPLKSLLLGASLATLALS), serve as a signal peptide directing secretion. 2 disulfide bridges follow: C48-C127 and C74-C88. S138 serves as the catalytic Nucleophile. A disulfide bond links C189 and C196. D193 is an active-site residue. The Proton donor/acceptor role is filled by H206. The tract at residues 228-262 (SSSTTSSSSDAASSSSAAGTSSSGLSGLSSFFGGL) is disordered.

Belongs to the cutinase family.

The protein localises to the secreted. The catalysed reaction is cutin + H2O = cutin monomers.. Functionally, catalyzes the hydrolysis of complex carboxylic polyesters found in the cell wall of plants. Degrades cutin, a macromolecule that forms the structure of the plant cuticle. The chain is Probable cutinase 1 from Aspergillus niger (strain ATCC MYA-4892 / CBS 513.88 / FGSC A1513).